We begin with the raw amino-acid sequence, 180 residues long: Sec-independent protein translocase protein TatB (180 aa).

A helical transmembrane segment spans residues 1-21 (MFDIGWSELLVIGVVALIAIG). Positions 95 to 180 (IEGVDKPVES…AERLKDAKAS (86 aa)) are disordered. The segment covering 103 to 123 (ESQPAASAAPETSATVEAPAT) has biased composition (low complexity). Positions 170 to 180 (EAERLKDAKAS) are enriched in basic and acidic residues.

This sequence belongs to the TatB family. As to quaternary structure, the Tat system comprises two distinct complexes: a TatABC complex, containing multiple copies of TatA, TatB and TatC subunits, and a separate TatA complex, containing only TatA subunits. Substrates initially bind to the TatABC complex, which probably triggers association of the separate TatA complex to form the active translocon.

The protein localises to the cell inner membrane. Functionally, part of the twin-arginine translocation (Tat) system that transports large folded proteins containing a characteristic twin-arginine motif in their signal peptide across membranes. Together with TatC, TatB is part of a receptor directly interacting with Tat signal peptides. TatB may form an oligomeric binding site that transiently accommodates folded Tat precursor proteins before their translocation. The polypeptide is Sec-independent protein translocase protein TatB (Bradyrhizobium sp. (strain BTAi1 / ATCC BAA-1182)).